A 136-amino-acid chain; its full sequence is Histone H3.3 (136 aa).

The tract at residues 1 to 42 (MARTKQTARKSTGGKAPRKQLASKAARKSAPVSGGVKKPHRY) is disordered. Lys5 carries the post-translational modification N6,N6,N6-trimethyllysine; alternate. At Lys5 the chain carries N6,N6-dimethyllysine; alternate. 2 positions are modified to N6-methyllysine; alternate: Lys5 and Lys10. An N6-acetyllysine; alternate modification is found at Lys10. A Phosphoserine modification is found at Ser11. An N6,N6-dimethyllysine; alternate modification is found at Lys15. N6-acetyllysine; alternate is present on residues Lys15, Lys19, Lys24, Lys28, and Lys37. 4 positions are modified to N6-methyllysine; alternate: Lys19, Lys24, Lys28, and Lys37. Lys28 and Lys37 each carry N6,N6,N6-trimethyllysine; alternate. 2 positions are modified to N6,N6-dimethyllysine; alternate: Lys28 and Lys37. N6-acetyllysine occurs at positions 57 and 65. Lys80 is subject to N6,N6,N6-trimethyllysine; alternate. An N6,N6-dimethyllysine; alternate modification is found at Lys80. Position 80 is an N6-methyllysine; alternate (Lys80).

This sequence belongs to the histone H3 family. As to quaternary structure, the nucleosome is a histone octamer containing two molecules each of H2A, H2B, H3 and H4 assembled in one H3-H4 heterotetramer and two H2A-H2B heterodimers. The octamer wraps approximately 147 bp of DNA. Phosphorylated by IPL1 to form H3S10ph. H3S10ph promotes subsequent H3K14ac formation and is required for transcriptional activation through TBP recruitment to the promoters. Post-translationally, mono-, di- and trimethylated by the COMPASS complex to form H3K4me1/2/3. H3K4me activates gene expression by regulating transcription elongation and plays a role in telomere length maintenance. H3K4me enrichment correlates with transcription levels, and occurs in a 5' to 3' gradient with H3K4me3 enrichment at the 5'-end of genes, shifting to H3K4me2 and then H3K4me1. Methylated by SET2 to form H3K36me. H3K36me represses gene expression. Methylated by DOT1 to form H3K79me. H3K79me is required for association of SIR proteins with telomeric regions and for telomeric silencing. The COMPASS-mediated formation of H3K4me2/3 and the DOT1-mediated formation of H3K79me require H2BK123ub1. In terms of processing, acetylation of histone H3 leads to transcriptional activation. H3K14ac formation by GCN5 is promoted by H3S10ph. H3K14ac can also be formed by ESA1. H3K56ac formation occurs predominantly in newly synthesized H3 molecules during G1, S and G2/M of the cell cycle and may be involved in DNA repair.

The protein resides in the nucleus. It is found in the chromosome. In terms of biological role, core component of nucleosome. Nucleosomes wrap and compact DNA into chromatin, limiting DNA accessibility to the cellular machineries which require DNA as a template. Histones thereby play a central role in transcription regulation, DNA repair, DNA replication and chromosomal stability. DNA accessibility is regulated via a complex set of post-translational modifications of histones, also called histone code, and nucleosome remodeling. The sequence is that of Histone H3.3 (HHT3) from Candida albicans (strain SC5314 / ATCC MYA-2876) (Yeast).